Reading from the N-terminus, the 295-residue chain is uncharacterized protein (295 aa).

Disordered regions lie at residues 33-52 (VDAPPASQIPGLSNLGDSHS) and 180-295 (LSKA…AELK). Ser-50 is subject to Phosphoserine. Composition is skewed to polar residues over residues 205-217 (QKNSSPTNFSKLI) and 241-251 (TSRASVLSQSP). Residues 267 to 276 (EASEGPEDTP) are compositionally biased toward acidic residues. Residues 277 to 289 (ESSQSPEESVSAS) are compositionally biased toward low complexity.

This is an uncharacterized protein from Homo sapiens (Human).